A 497-amino-acid chain; its full sequence is Proline--tRNA ligase (497 aa).

The protein belongs to the class-II aminoacyl-tRNA synthetase family. ProS type 3 subfamily. As to quaternary structure, homodimer.

It is found in the cytoplasm. The catalysed reaction is tRNA(Pro) + L-proline + ATP = L-prolyl-tRNA(Pro) + AMP + diphosphate. In terms of biological role, catalyzes the attachment of proline to tRNA(Pro) in a two-step reaction: proline is first activated by ATP to form Pro-AMP and then transferred to the acceptor end of tRNA(Pro). This chain is Proline--tRNA ligase, found in Deinococcus geothermalis (strain DSM 11300 / CIP 105573 / AG-3a).